A 420-amino-acid polypeptide reads, in one-letter code: D-tagatose-1,6-bisphosphate aldolase subunit GatZ (420 aa).

It belongs to the GatZ/KbaZ family. GatZ subfamily. As to quaternary structure, forms a complex with GatY.

It functions in the pathway carbohydrate metabolism; D-tagatose 6-phosphate degradation; D-glyceraldehyde 3-phosphate and glycerone phosphate from D-tagatose 6-phosphate: step 2/2. Functionally, component of the tagatose-1,6-bisphosphate aldolase GatYZ that is required for full activity and stability of the Y subunit. Could have a chaperone-like function for the proper and stable folding of GatY. When expressed alone, GatZ does not show any aldolase activity. Is involved in the catabolism of galactitol. The protein is D-tagatose-1,6-bisphosphate aldolase subunit GatZ of Escherichia coli O45:K1 (strain S88 / ExPEC).